A 232-amino-acid polypeptide reads, in one-letter code: 5'-methylthioadenosine/S-adenosylhomocysteine nucleosidase (232 aa).

Residue Glu12 is the Proton acceptor of the active site. Residues Gly78, Ile152, and 173–174 each bind substrate; that span reads ME. The active-site Proton donor is the Asp197.

Belongs to the PNP/UDP phosphorylase family. MtnN subfamily. Homodimer.

The enzyme catalyses S-adenosyl-L-homocysteine + H2O = S-(5-deoxy-D-ribos-5-yl)-L-homocysteine + adenine. It carries out the reaction S-methyl-5'-thioadenosine + H2O = 5-(methylsulfanyl)-D-ribose + adenine. The catalysed reaction is 5'-deoxyadenosine + H2O = 5-deoxy-D-ribose + adenine. It functions in the pathway amino-acid biosynthesis; L-methionine biosynthesis via salvage pathway; S-methyl-5-thio-alpha-D-ribose 1-phosphate from S-methyl-5'-thioadenosine (hydrolase route): step 1/2. Its function is as follows. Catalyzes the irreversible cleavage of the glycosidic bond in both 5'-methylthioadenosine (MTA) and S-adenosylhomocysteine (SAH/AdoHcy) to adenine and the corresponding thioribose, 5'-methylthioribose and S-ribosylhomocysteine, respectively. Also cleaves 5'-deoxyadenosine, a toxic by-product of radical S-adenosylmethionine (SAM) enzymes, into 5-deoxyribose and adenine. Thus, is required for in vivo function of the radical SAM enzymes biotin synthase and lipoic acid synthase, that are inhibited by 5'-deoxyadenosine accumulation. This Salmonella dublin (strain CT_02021853) protein is 5'-methylthioadenosine/S-adenosylhomocysteine nucleosidase.